The sequence spans 388 residues: Acetate kinase (388 aa).

Residue N8 coordinates Mg(2+). Residue K15 participates in ATP binding. R88 contributes to the substrate binding site. D144 acts as the Proton donor/acceptor in catalysis. ATP-binding positions include 202–206 (HLGNG), 276–278 (DMR), and 321–325 (GVGEN). E375 contacts Mg(2+).

The protein belongs to the acetokinase family. As to quaternary structure, homodimer. It depends on Mg(2+) as a cofactor. Mn(2+) serves as cofactor.

Its subcellular location is the cytoplasm. The enzyme catalyses acetate + ATP = acetyl phosphate + ADP. Its pathway is metabolic intermediate biosynthesis; acetyl-CoA biosynthesis; acetyl-CoA from acetate: step 1/2. Catalyzes the formation of acetyl phosphate from acetate and ATP. Can also catalyze the reverse reaction. This Mycoplasmoides gallisepticum (strain R(low / passage 15 / clone 2)) (Mycoplasma gallisepticum) protein is Acetate kinase.